The following is a 238-amino-acid chain: Large ribosomal subunit protein uL5c (238 aa).

This sequence belongs to the universal ribosomal protein uL5 family. Part of the 50S ribosomal subunit; contacts the 5S rRNA.

Its subcellular location is the plastid. The protein localises to the chloroplast. In terms of biological role, binds 5S rRNA, forms part of the central protuberance of the 50S subunit. The protein is Large ribosomal subunit protein uL5c (rpl5) of Thalassiosira pseudonana (Marine diatom).